The chain runs to 409 residues: DNA polymerase IV 2 (409 aa).

The 186-residue stretch at 5 to 190 folds into the UmuC domain; it reads IFMVDMESFF…LPIECLYGVG (186 aa). Mg(2+) contacts are provided by D9 and D105. E106 is a catalytic residue.

The protein belongs to the DNA polymerase type-Y family. Monomer. It depends on Mg(2+) as a cofactor.

The protein localises to the cytoplasm. The enzyme catalyses DNA(n) + a 2'-deoxyribonucleoside 5'-triphosphate = DNA(n+1) + diphosphate. Poorly processive, error-prone DNA polymerase involved in untargeted mutagenesis. Copies undamaged DNA at stalled replication forks, which arise in vivo from mismatched or misaligned primer ends. These misaligned primers can be extended by PolIV. Exhibits no 3'-5' exonuclease (proofreading) activity. May be involved in translesional synthesis, in conjunction with the beta clamp from PolIII. This is DNA polymerase IV 2 (dinB2) from Halalkalibacterium halodurans (strain ATCC BAA-125 / DSM 18197 / FERM 7344 / JCM 9153 / C-125) (Bacillus halodurans).